The following is a 776-amino-acid chain: Ribosomal biogenesis protein LAS1L (776 aa).

Residues 185 to 227 (DEDQLDAEDPEEEEREIIADDVLEEIPEPQDDDKDEELAVEDD) show a composition bias toward acidic residues. The segment at 185–247 (DEDQLDAEDP…SHPEPSSRHK (63 aa)) is disordered. Residues 228–247 (ANTKGNEEVASHPEPSSRHK) are compositionally biased toward basic and acidic residues. Phosphoserine is present on residues serine 425 and serine 509. The tract at residues 501 to 646 (KAIEGSSSSS…DYDDDEEEDR (146 aa)) is disordered. Positions 544 to 557 (GNLKDVKQEEKKEN) are enriched in basic and acidic residues. Composition is skewed to acidic residues over residues 558–602 (EEEE…EEEE) and 611–646 (MEAD…EEDR). The residue at position 658 (serine 658) is a Phosphoserine. Residues 677 to 696 (SAWQVSSEDVRWGTFPLGRL) form an interaction with NOL9 region. Residues 733 to 759 (SSTLSLCCGGSNTNSSSSSSSGNMEGL) are disordered. The segment covering 741 to 755 (GGSNTNSSSSSSSGN) has biased composition (low complexity).

It belongs to the LAS1 family. In terms of assembly, component of some MLL1/MLL complex, at least composed of the core components KMT2A/MLL1, ASH2L, HCFC1/HCF1, WDR5 and RBBP5, as well as the facultative components BACC1, CHD8, E2F6, HSP70, INO80C, KANSL1, LAS1L, MAX, MCRS1, MGA, MYST1/MOF, PELP1, PHF20, PRP31, RING2, RUVB1/TIP49A, RUVB2/TIP49B, SENP3, TAF1, TAF4, TAF6, TAF7, TAF9 and TEX10. Component of the 5FMC complex, at least composed of PELP1, LAS1L, TEX10, WDR18 and SENP3; the complex interacts with methylated CHTOP and ZNF148. Interacts with NOL9 to form an ITS2 pre-rRNA endonuclease-kinase complex.

The protein localises to the nucleus. It localises to the nucleolus. Its subcellular location is the nucleoplasm. The protein resides in the cytoplasm. Its function is as follows. Required for the synthesis of the 60S ribosomal subunit and maturation of the 28S rRNA. Functions as a component of the Five Friends of Methylated CHTOP (5FMC) complex; the 5FMC complex is recruited to ZNF148 by methylated CHTOP, leading to desumoylation of ZNF148 and subsequent transactivation of ZNF148 target genes. Required for the efficient pre-rRNA processing at both ends of internal transcribed spacer 2 (ITS2). This Mus musculus (Mouse) protein is Ribosomal biogenesis protein LAS1L (Las1l).